We begin with the raw amino-acid sequence, 262 residues long: Type III pantothenate kinase (262 aa).

Residue 5 to 12 (DAGNTRSK) participates in ATP binding. Substrate contacts are provided by residues Tyr102 and 110–113 (GSDR). Asp112 acts as the Proton acceptor in catalysis. K(+) is bound at residue Asp132. Residue Thr135 participates in ATP binding. Thr190 lines the substrate pocket.

Belongs to the type III pantothenate kinase family. As to quaternary structure, homodimer. The cofactor is NH4(+). K(+) serves as cofactor.

The protein localises to the cytoplasm. It catalyses the reaction (R)-pantothenate + ATP = (R)-4'-phosphopantothenate + ADP + H(+). It participates in cofactor biosynthesis; coenzyme A biosynthesis; CoA from (R)-pantothenate: step 1/5. Functionally, catalyzes the phosphorylation of pantothenate (Pan), the first step in CoA biosynthesis. In Idiomarina loihiensis (strain ATCC BAA-735 / DSM 15497 / L2-TR), this protein is Type III pantothenate kinase.